The following is a 308-amino-acid chain: ADP-L-glycero-D-manno-heptose-6-epimerase (308 aa).

NADP(+)-binding positions include 10-11 (FI), 31-32 (DN), Lys-38, Lys-53, 75-79 (EGACS), and Asn-92. The active-site Proton acceptor is Tyr-139. Lys-143 is a binding site for NADP(+). A substrate-binding site is contributed by Asn-168. NADP(+) is bound by residues Val-169 and Lys-177. The Proton acceptor role is filled by Lys-177. Substrate-binding positions include Ser-179, His-186, 200–203 (FAGS), Arg-208, and Tyr-271.

This sequence belongs to the NAD(P)-dependent epimerase/dehydratase family. HldD subfamily. In terms of assembly, homopentamer. NADP(+) is required as a cofactor.

It carries out the reaction ADP-D-glycero-beta-D-manno-heptose = ADP-L-glycero-beta-D-manno-heptose. Its pathway is nucleotide-sugar biosynthesis; ADP-L-glycero-beta-D-manno-heptose biosynthesis; ADP-L-glycero-beta-D-manno-heptose from D-glycero-beta-D-manno-heptose 7-phosphate: step 4/4. Its function is as follows. Catalyzes the interconversion between ADP-D-glycero-beta-D-manno-heptose and ADP-L-glycero-beta-D-manno-heptose via an epimerization at carbon 6 of the heptose. The protein is ADP-L-glycero-D-manno-heptose-6-epimerase of Haemophilus influenzae (strain 86-028NP).